Consider the following 379-residue polypeptide: Guanine nucleotide-binding protein G(s) subunit alpha (379 aa).

The tract at residues 1–29 (MGCFGSAGAKGDAEENKKRKEANKNINKQ) is disordered. Residue glycine 2 is the site of N-palmitoyl glycine attachment. A lipid anchor (S-palmitoyl cysteine) is attached at cysteine 3. The G-alpha domain occupies 39–379 (ATHRLLLLGA…RMHLRQYELL (341 aa)). The interval 42 to 55 (RLLLLGAGESGKST) is G1 motif. GTP contacts are provided by residues 47 to 54 (GAGESGKS), 183 to 189 (LRCRVLT), 208 to 212 (DVGGQ), 277 to 280 (NKQD), and alanine 351. Positions 54 and 189 each coordinate Mg(2+). The G2 motif stretch occupies residues 181–189 (DILRCRVLT). The interval 204–213 (FHMFDVGGQR) is G3 motif. A G4 motif region spans residues 273-280 (ILFLNKQD). Residues 349 to 354 (TCAVDT) form a G5 motif region.

It belongs to the G-alpha family. G(s) subfamily. As to quaternary structure, g proteins are composed of 3 units; alpha, beta and gamma. The alpha chain contains the guanine nucleotide binding site.

Guanine nucleotide-binding proteins (G proteins) are involved as modulators or transducers in various transmembrane signaling systems. The G(s) protein is involved in hormonal regulation of adenylate cyclase: it activates the cyclase in response to beta-adrenergic stimuli. The chain is Guanine nucleotide-binding protein G(s) subunit alpha from Homarus americanus (American lobster).